The sequence spans 416 residues: Probable mannose-6-phosphate isomerase (416 aa).

4 residues coordinate Zn(2+): Gln-99, His-101, Glu-126, and His-259. The active site involves Arg-278.

It belongs to the mannose-6-phosphate isomerase type 1 family. Zn(2+) serves as cofactor.

It localises to the cytoplasm. The enzyme catalyses D-mannose 6-phosphate = D-fructose 6-phosphate. It participates in nucleotide-sugar biosynthesis; GDP-alpha-D-mannose biosynthesis; alpha-D-mannose 1-phosphate from D-fructose 6-phosphate: step 1/2. Its function is as follows. Involved in the synthesis of the GDP-mannose and dolichol-phosphate-mannose required for a number of critical mannosyl transfer reactions. The protein is Probable mannose-6-phosphate isomerase of Caenorhabditis elegans.